The chain runs to 177 residues: MSCVGKLPIIIPEGVKVGLNDLEVKISGPKGELSKSFKGSIGISLAENKLLVKPLSSSKSARAMWGTARSIISNMVTGVKEGFKLKLEINGVGYRAMMKGKYLNLMLAKSHNTKIEIPSHIKVEVPKQNIIILEGTDKEKLGQFASIIIKQRPPEPYKGKGIKFEDQFIPCKEGKKN.

This sequence belongs to the universal ribosomal protein uL6 family. In terms of assembly, part of the 50S ribosomal subunit.

In terms of biological role, this protein binds to the 23S rRNA, and is important in its secondary structure. It is located near the subunit interface in the base of the L7/L12 stalk, and near the tRNA binding site of the peptidyltransferase center. In Rickettsia bellii (strain OSU 85-389), this protein is Large ribosomal subunit protein uL6.